Here is a 142-residue protein sequence, read N- to C-terminus: Phenylalanine ammonia-lyase (142 aa).

(E)-cinnamate is bound by residues lysine 66, glutamate 94, and asparagine 97.

It belongs to the PAL/histidase family. In terms of assembly, homotetramer. Contains an active site 4-methylidene-imidazol-5-one (MIO), which is formed autocatalytically by cyclization and dehydration of residues Ala-Ser-Gly.

The protein localises to the cytoplasm. It catalyses the reaction L-phenylalanine = (E)-cinnamate + NH4(+). Its pathway is phenylpropanoid metabolism; trans-cinnamate biosynthesis; trans-cinnamate from L-phenylalanine: step 1/1. Functionally, catalyzes the non-oxidative deamination of L-phenylalanine to form trans-cinnamic acid and a free ammonium ion. Facilitates the commitment step in phenylpropanoid pathways that produce secondary metabolites such as lignins, coumarins and flavonoids. The sequence is that of Phenylalanine ammonia-lyase (palA) from Agaricus bisporus (White button mushroom).